The following is a 76-amino-acid chain: Cytochrome c oxidase subunit 6C-2 (76 aa).

Residues 4 to 14 (GALLPKPQMRG) lie on the Mitochondrial matrix side of the membrane. The helical transmembrane segment at 15-55 (LLAKRLRVHIVGAFVVALGVAAAYKFGVAEPRKKAYADFYR) threads the bilayer. Residues 56–76 (NYDSMKDFEEMRQAGVFQSAK) are Mitochondrial intermembrane-facing. S74 bears the Phosphoserine mark.

The protein belongs to the cytochrome c oxidase subunit 6c family. In terms of assembly, component of the cytochrome c oxidase (complex IV, CIV), a multisubunit enzyme composed of 14 subunits. The complex is composed of a catalytic core of 3 subunits MT-CO1, MT-CO2 and MT-CO3, encoded in the mitochondrial DNA, and 11 supernumerary subunits COX4I, COX5A, COX5B, COX6A, COX6B, COX6C, COX7A, COX7B, COX7C, COX8 and NDUFA4, which are encoded in the nuclear genome. The complex exists as a monomer or a dimer and forms supercomplexes (SCs) in the inner mitochondrial membrane with NADH-ubiquinone oxidoreductase (complex I, CI) and ubiquinol-cytochrome c oxidoreductase (cytochrome b-c1 complex, complex III, CIII), resulting in different assemblies (supercomplex SCI(1)III(2)IV(1) and megacomplex MCI(2)III(2)IV(2)).

The protein localises to the mitochondrion inner membrane. Its pathway is energy metabolism; oxidative phosphorylation. Functionally, component of the cytochrome c oxidase, the last enzyme in the mitochondrial electron transport chain which drives oxidative phosphorylation. The respiratory chain contains 3 multisubunit complexes succinate dehydrogenase (complex II, CII), ubiquinol-cytochrome c oxidoreductase (cytochrome b-c1 complex, complex III, CIII) and cytochrome c oxidase (complex IV, CIV), that cooperate to transfer electrons derived from NADH and succinate to molecular oxygen, creating an electrochemical gradient over the inner membrane that drives transmembrane transport and the ATP synthase. Cytochrome c oxidase is the component of the respiratory chain that catalyzes the reduction of oxygen to water. Electrons originating from reduced cytochrome c in the intermembrane space (IMS) are transferred via the dinuclear copper A center (CU(A)) of subunit 2 and heme A of subunit 1 to the active site in subunit 1, a binuclear center (BNC) formed by heme A3 and copper B (CU(B)). The BNC reduces molecular oxygen to 2 water molecules using 4 electrons from cytochrome c in the IMS and 4 protons from the mitochondrial matrix. This Rattus norvegicus (Rat) protein is Cytochrome c oxidase subunit 6C-2 (Cox6c2).